Reading from the N-terminus, the 473-residue chain is Putative amidase AmiC (473 aa).

Residues Lys82 and Ser157 each act as charge relay system in the active site. Catalysis depends on Ser181, which acts as the Acyl-ester intermediate.

The protein belongs to the amidase family.

The enzyme catalyses a monocarboxylic acid amide + H2O = a monocarboxylate + NH4(+). The sequence is that of Putative amidase AmiC (amiC) from Mycobacterium bovis (strain ATCC BAA-935 / AF2122/97).